We begin with the raw amino-acid sequence, 233 residues long: DNA repair protein RecO (233 aa).

It belongs to the RecO family.

Involved in DNA repair and RecF pathway recombination. The chain is DNA repair protein RecO from Pseudomonas aeruginosa (strain UCBPP-PA14).